Reading from the N-terminus, the 240-residue chain is 2,3,4,5-tetrahydropyridine-2,6-dicarboxylate N-acetyltransferase (240 aa).

The protein belongs to the transferase hexapeptide repeat family. DapH subfamily.

The catalysed reaction is (S)-2,3,4,5-tetrahydrodipicolinate + acetyl-CoA + H2O = L-2-acetamido-6-oxoheptanedioate + CoA. Its pathway is amino-acid biosynthesis; L-lysine biosynthesis via DAP pathway; LL-2,6-diaminopimelate from (S)-tetrahydrodipicolinate (acetylase route): step 1/3. Functionally, catalyzes the transfer of an acetyl group from acetyl-CoA to tetrahydrodipicolinate. The sequence is that of 2,3,4,5-tetrahydropyridine-2,6-dicarboxylate N-acetyltransferase from Staphylococcus epidermidis (strain ATCC 12228 / FDA PCI 1200).